Reading from the N-terminus, the 84-residue chain is Small ribosomal subunit protein uS17 (84 aa).

The protein belongs to the universal ribosomal protein uS17 family. In terms of assembly, part of the 30S ribosomal subunit.

One of the primary rRNA binding proteins, it binds specifically to the 5'-end of 16S ribosomal RNA. The sequence is that of Small ribosomal subunit protein uS17 from Blochmanniella pennsylvanica (strain BPEN).